A 480-amino-acid polypeptide reads, in one-letter code: UDP-glycosyltransferase 72B2 (480 aa).

Residues Ser277, 347-349, 364-372, and 386-389 contribute to the UDP-alpha-D-glucose site; these read APQ, HCGWNSTLE, and FAEQ.

Belongs to the UDP-glycosyltransferase family.

In Arabidopsis thaliana (Mouse-ear cress), this protein is UDP-glycosyltransferase 72B2 (UGT72B2).